The following is a 185-amino-acid chain: Large ribosomal subunit protein bL25 (185 aa).

The protein belongs to the bacterial ribosomal protein bL25 family. CTC subfamily. Part of the 50S ribosomal subunit; part of the 5S rRNA/L5/L18/L25 subcomplex. Contacts the 5S rRNA. Binds to the 5S rRNA independently of L5 and L18.

Functionally, this is one of the proteins that binds to the 5S RNA in the ribosome where it forms part of the central protuberance. The sequence is that of Large ribosomal subunit protein bL25 from Chlamydia trachomatis serovar D (strain ATCC VR-885 / DSM 19411 / UW-3/Cx).